The chain runs to 332 residues: Ribosomal RNA small subunit methyltransferase H (332 aa).

S-adenosyl-L-methionine contacts are provided by residues 36–38 (GGY), D54, F81, D102, and Q109. The interval 295 to 322 (PRARSAKLRGAERTESPAHAAGDLPGWP) is disordered.

This sequence belongs to the methyltransferase superfamily. RsmH family.

The protein localises to the cytoplasm. The enzyme catalyses cytidine(1402) in 16S rRNA + S-adenosyl-L-methionine = N(4)-methylcytidine(1402) in 16S rRNA + S-adenosyl-L-homocysteine + H(+). Functionally, specifically methylates the N4 position of cytidine in position 1402 (C1402) of 16S rRNA. The sequence is that of Ribosomal RNA small subunit methyltransferase H from Rhodopseudomonas palustris (strain ATCC BAA-98 / CGA009).